We begin with the raw amino-acid sequence, 483 residues long: UDP-N-acetylmuramoyl-L-alanyl-D-glutamate--2,6-diaminopimelate ligase (483 aa).

Ser-30 contacts UDP-N-acetyl-alpha-D-muramoyl-L-alanyl-D-glutamate. Residue 109-115 coordinates ATP; that stretch reads GTNGKTT. UDP-N-acetyl-alpha-D-muramoyl-L-alanyl-D-glutamate contacts are provided by residues 151 to 152, Ser-178, and Arg-186; that span reads TT. At Lys-218 the chain carries N6-carboxylysine. Meso-2,6-diaminopimelate contacts are provided by residues Arg-380, 403 to 406, Gly-453, and Glu-457; that span reads DNPR. The Meso-diaminopimelate recognition motif motif lies at 403-406; it reads DNPR.

Belongs to the MurCDEF family. MurE subfamily. Mg(2+) serves as cofactor. Carboxylation is probably crucial for Mg(2+) binding and, consequently, for the gamma-phosphate positioning of ATP.

The protein localises to the cytoplasm. It carries out the reaction UDP-N-acetyl-alpha-D-muramoyl-L-alanyl-D-glutamate + meso-2,6-diaminopimelate + ATP = UDP-N-acetyl-alpha-D-muramoyl-L-alanyl-gamma-D-glutamyl-meso-2,6-diaminopimelate + ADP + phosphate + H(+). It participates in cell wall biogenesis; peptidoglycan biosynthesis. Its function is as follows. Catalyzes the addition of meso-diaminopimelic acid to the nucleotide precursor UDP-N-acetylmuramoyl-L-alanyl-D-glutamate (UMAG) in the biosynthesis of bacterial cell-wall peptidoglycan. The sequence is that of UDP-N-acetylmuramoyl-L-alanyl-D-glutamate--2,6-diaminopimelate ligase from Chlamydia abortus (strain DSM 27085 / S26/3) (Chlamydophila abortus).